A 339-amino-acid chain; its full sequence is Isopentenyl-diphosphate delta-isomerase (339 aa).

Position 7–8 (7–8) interacts with substrate; sequence RK. FMN contacts are provided by residues serine 65, 66-68, serine 96, and asparagine 125; that span reads SMT. 96–98 lines the substrate pocket; that stretch reads SQR. Glutamine 160 is a binding site for substrate. Glutamate 161 serves as a coordination point for Mg(2+). FMN-binding positions include lysine 192, threonine 222, and 293–294; that span reads AG.

Belongs to the IPP isomerase type 2 family. As to quaternary structure, homooctamer. Dimer of tetramers. It depends on FMN as a cofactor. NADPH is required as a cofactor. Mg(2+) serves as cofactor.

The protein resides in the cytoplasm. It carries out the reaction isopentenyl diphosphate = dimethylallyl diphosphate. Its function is as follows. Involved in the biosynthesis of isoprenoids. Catalyzes the 1,3-allylic rearrangement of the homoallylic substrate isopentenyl (IPP) to its allylic isomer, dimethylallyl diphosphate (DMAPP). This Vibrio campbellii (strain ATCC BAA-1116) protein is Isopentenyl-diphosphate delta-isomerase.